A 671-amino-acid polypeptide reads, in one-letter code: MSELEEDFAKILMLKEERIKELEKRLSEKEEEIQELKRKLHKCQSVLPVPSTHIGPRTTRAQGISAEPQTYRSFHDLRQAFRKFTKSERSKDLIKEAILDNDFMKNLELSQIQEIVDCMYPVEYGKDSCIIKEGDVGSLVYVMEDGKVEVTKEGVKLCTMGPGKVFGELAILYNCTRTATVKTLVNVKLWAIDRQCFQTIMMRTGLIKHTEYMEFLKSVPTFQSLPDEILSKLADVLEETHYENGEYIIRQGARGDTFFIISKGQVNVTREDSPSEDPVFLRTLGKGDWFGEKALQGEDVRTANVIAAEAVTCLVIDRDSFKHLIGGLDDVSNKAYEDAEAKAKYEAEAAFFANLKLSDFNIIDTLGVGGFGRVELVQLKSEESKTFAMKILKKRHIVDTRQQEHIRSEKQIMQGAHSDFIVRLYRTFKDSKYLYMLMEACLGGELWTILRDRGSFEDSTTRFYTACVVEAFAYLHSKGIIYRDLKPENLILDHRGYAKLVDFGFAKKIGFGKKTWTFCGTPEYVAPEIILNKGHDISADYWSLGILMYELLTGSPPFSGPDPMKTYNIILRGIDMIEFPKKIAKNAANLIKKLCRDNPSERLGNLKNGVKDIQKHKWFEGFNWEGLRKGTLTPPIIPSVASPTDTSNFDSFPEDSDEPPPDDNSGWDIDF.

Ser2 carries the N-acetylserine modification. Positions 2 to 59 form a coiled coil; that stretch reads SELEEDFAKILMLKEERIKELEKRLSEKEEEIQELKRKLHKCQSVLPVPSTHIGPRTT. The segment at 2–102 is required for dimerization; that stretch reads SELEEDFAKI…LIKEAILDND (101 aa). The segment at 9–44 is leucine-zipper; sequence AKILMLKEERIKELEKRLSEKEEEIQELKRKLHKCQ. The segment at 50 to 75 is autoinhibitory domain; that stretch reads PSTHIGPRTTRAQGISAEPQTYRSFH. A Phosphothreonine; by autocatalysis modification is found at Thr59. The tract at residues 103 to 220 is cGMP-binding, high affinity; sequence FMKNLELSQI…EYMEFLKSVP (118 aa). 3',5'-cyclic GMP contacts are provided by residues 167-170, 177-178, Arg282, 291-294, 301-302, and Tyr336; these read GELA, RT, and GEKA. Residues 221-341 are cGMP-binding, low affinity; that stretch reads TFQSLPDEIL…SNKAYEDAEA (121 aa). Residues 360 to 619 form the Protein kinase domain; sequence FNIIDTLGVG…VKDIQKHKWF (260 aa). ATP-binding positions include 366–374 and Lys390; that span reads LGVGGFGRV. Asp484 (proton acceptor) is an active-site residue. At Thr515 the chain carries Phosphothreonine. An AGC-kinase C-terminal domain is found at 620-671; that stretch reads EGFNWEGLRKGTLTPPIIPSVASPTDTSNFDSFPEDSDEPPPDDNSGWDIDF. The segment at 635-671 is disordered; it reads PIIPSVASPTDTSNFDSFPEDSDEPPPDDNSGWDIDF. The segment covering 652-661 has biased composition (acidic residues); it reads FPEDSDEPPP.

It belongs to the protein kinase superfamily. AGC Ser/Thr protein kinase family. cGMP subfamily. Isoform alpha: parallel homodimer or heterodimer and also heterotetramer. Interacts directly with PPP1R12A. Non-covalent dimer of dimer of PRKG1-PRKG1 and PPP1R12A-PPP1R12A. This interaction targets PRKG1 to stress fibers to mediate smooth muscle cell relaxation and vasodilation in responses to rises in cGMP. Isoform beta: antiparallel homodimer. Part of cGMP kinase signaling complex at least composed of ACTA2/alpha-actin, CNN1/calponin H1, PLN/phospholamban, PRKG1 and ITPR1. Interacts with IRAG1. Forms a stable complex with ITPR1, IRAG1, and isoform beta of PRKG1. Interacts with TRPC7 (via ankyrin repeat domain). Isoform alpha interacts with RGS2. Interacts with GTF2I. Autophosphorylation increases kinase activity. Post-translationally, 65 kDa monomer is produced by proteolytic cleavage. Detected in cerebellum, hippocampus, dorsomedial hypothalamus, medulla, subcommissural organ, cerebral cortex, amygdala, habenulae, various hypothalamic regions, olfactory bulb, pituitary gland, and retina. Isoform alpha is prominent in the cerebellum and medulla, whereas isoform Beta is predominant in the cortex, hippocampus, hypothalamus, and olfactory bulb.

It localises to the cytoplasm. The enzyme catalyses L-seryl-[protein] + ATP = O-phospho-L-seryl-[protein] + ADP + H(+). It catalyses the reaction L-threonyl-[protein] + ATP = O-phospho-L-threonyl-[protein] + ADP + H(+). With respect to regulation, in the absence of cGMP, PRKG1 activity is suppressed by autoinhibitory contacts. Its function is as follows. Serine/threonine protein kinase that acts as a key mediator of the nitric oxide (NO)/cGMP signaling pathway. GMP binding activates PRKG1, which phosphorylates serines and threonines on many cellular proteins. Numerous protein targets for PRKG1 phosphorylation are implicated in modulating cellular calcium, but the contribution of each of these targets may vary substantially among cell types. Proteins that are phosphorylated by PRKG1 regulate platelet activation and adhesion, smooth muscle contraction, cardiac function, gene expression, feedback of the NO-signaling pathway, and other processes involved in several aspects of the CNS like axon guidance, hippocampal and cerebellar learning, circadian rhythm and nociception. Smooth muscle relaxation is mediated through lowering of intracellular free calcium, by desensitization of contractile proteins to calcium, and by decrease in the contractile state of smooth muscle or in platelet activation. Regulates intracellular calcium levels via several pathways: phosphorylates IRAG1 and inhibits IP3-induced Ca(2+) release from intracellular stores, phosphorylation of KCNMA1 (BKCa) channels decreases intracellular Ca(2+) levels, which leads to increased opening of this channel. PRKG1 phosphorylates the canonical transient receptor potential channel (TRPC) family which inactivates the associated inward calcium current. Another mode of action of NO/cGMP/PKGI signaling involves PKGI-mediated inactivation of the Ras homolog gene family member A (RhoA). Phosphorylation of RHOA by PRKG1 blocks the action of this protein in myriad processes: regulation of RHOA translocation; decreasing contraction; controlling vesicle trafficking, reduction of myosin light chain phosphorylation resulting in vasorelaxation. Activation of PRKG1 by NO signaling also alters gene expression in a number of tissues. In smooth muscle cells, increased cGMP and PRKG1 activity influence expression of smooth muscle-specific contractile proteins, levels of proteins in the NO/cGMP signaling pathway, down-regulation of the matrix proteins osteopontin and thrombospondin-1 to limit smooth muscle cell migration and phenotype. Regulates vasodilator-stimulated phosphoprotein (VASP) functions in platelets and smooth muscle. This chain is cGMP-dependent protein kinase 1 (Prkg1), found in Mus musculus (Mouse).